The following is a 178-amino-acid chain: ATP synthase subunit d, mitochondrial (178 aa).

The segment at 149–178 is disordered; sequence NKPTFWPHTPEEQVGYKSKEQLEAEAQGHH. Positions 165 to 178 are enriched in basic and acidic residues; sequence KSKEQLEAEAQGHH.

This sequence belongs to the ATPase d subunit family. In terms of assembly, F-type ATPases have 2 components, CF(1) - the catalytic core - and CF(0) - the membrane proton channel. CF(0) seems to have nine subunits: a, b, c, d, e, f, g, F6 and 8 (or A6L).

It localises to the mitochondrion. The protein resides in the mitochondrion inner membrane. Mitochondrial membrane ATP synthase (F(1)F(0) ATP synthase or Complex V) produces ATP from ADP in the presence of a proton gradient across the membrane which is generated by electron transport complexes of the respiratory chain. F-type ATPases consist of two structural domains, F(1) - containing the extramembraneous catalytic core, and F(0) - containing the membrane proton channel, linked together by a central stalk and a peripheral stalk. During catalysis, ATP synthesis in the catalytic domain of F(1) is coupled via a rotary mechanism of the central stalk subunits to proton translocation. Part of the complex F(0) domain and the peripheric stalk, which acts as a stator to hold the catalytic alpha(3)beta(3) subcomplex and subunit a/ATP6 static relative to the rotary elements. This is ATP synthase subunit d, mitochondrial from Drosophila melanogaster (Fruit fly).